Here is a 239-residue protein sequence, read N- to C-terminus: MLNIGLSGSTGKMGGTILERIDKFKDCKIAAKFNSTNNLDDLDNFCKNSDVIIDFSTPEILEKLINYALKHNTKLVIGTTGLQPQHFKLLEKAAQTLPVLYSANMSIGANLLSYLAKEVTKILDDYDVEILETHHRNKKDSPSGTAVMLAETIASKKGLNITFNRGNRLRSEKEIGISSLRGGNVHGIHEISFLGDDEIITLKHEALNKNSFSIGAIKAAIWLQDKPSALYSMQDIYKI.

Residues G8–M13, G78–T80, and S102–M105 contribute to the NAD(+) site. Catalysis depends on H134, which acts as the Proton donor/acceptor. H135 serves as a coordination point for (S)-2,3,4,5-tetrahydrodipicolinate. The active-site Proton donor is the K138. G144–T145 provides a ligand contact to (S)-2,3,4,5-tetrahydrodipicolinate.

Belongs to the DapB family.

It is found in the cytoplasm. It carries out the reaction (S)-2,3,4,5-tetrahydrodipicolinate + NAD(+) + H2O = (2S,4S)-4-hydroxy-2,3,4,5-tetrahydrodipicolinate + NADH + H(+). The catalysed reaction is (S)-2,3,4,5-tetrahydrodipicolinate + NADP(+) + H2O = (2S,4S)-4-hydroxy-2,3,4,5-tetrahydrodipicolinate + NADPH + H(+). It participates in amino-acid biosynthesis; L-lysine biosynthesis via DAP pathway; (S)-tetrahydrodipicolinate from L-aspartate: step 4/4. Functionally, catalyzes the conversion of 4-hydroxy-tetrahydrodipicolinate (HTPA) to tetrahydrodipicolinate. The chain is 4-hydroxy-tetrahydrodipicolinate reductase from Rickettsia africae (strain ESF-5).